The chain runs to 176 residues: Large ribosomal subunit protein uL6 (176 aa).

Residues 151–169 (RPPEPYKGRGIKYTDEHIQ) are compositionally biased toward basic and acidic residues. Residues 151 to 176 (RPPEPYKGRGIKYTDEHIQRKAGKTK) form a disordered region.

This sequence belongs to the universal ribosomal protein uL6 family. In terms of assembly, part of the 50S ribosomal subunit.

In terms of biological role, this protein binds to the 23S rRNA, and is important in its secondary structure. It is located near the subunit interface in the base of the L7/L12 stalk, and near the tRNA binding site of the peptidyltransferase center. This is Large ribosomal subunit protein uL6 from Desulfosudis oleivorans (strain DSM 6200 / JCM 39069 / Hxd3) (Desulfococcus oleovorans).